The following is a 212-amino-acid chain: Protein-L-isoaspartate O-methyltransferase (212 aa).

Ser-60 is a catalytic residue.

This sequence belongs to the methyltransferase superfamily. L-isoaspartyl/D-aspartyl protein methyltransferase family.

The protein resides in the cytoplasm. It carries out the reaction [protein]-L-isoaspartate + S-adenosyl-L-methionine = [protein]-L-isoaspartate alpha-methyl ester + S-adenosyl-L-homocysteine. Catalyzes the methyl esterification of L-isoaspartyl residues in peptides and proteins that result from spontaneous decomposition of normal L-aspartyl and L-asparaginyl residues. It plays a role in the repair and/or degradation of damaged proteins. In Methanococcus maripaludis (strain DSM 14266 / JCM 13030 / NBRC 101832 / S2 / LL), this protein is Protein-L-isoaspartate O-methyltransferase.